The sequence spans 243 residues: Proteasome subunit beta (243 aa).

2 stretches are compositionally biased toward basic and acidic residues: residues 1–11 (MRTPTHDEFSG) and 33–47 (NADR…KETK). A propeptide spans 1 to 49 (MRTPTHDEFSGRLDSLNGDRSNVFGPELGEFSNADRRADELGDKETKTG) (removed in mature form; by autocatalysis). Residues 1–50 (MRTPTHDEFSGRLDSLNGDRSNVFGPELGEFSNADRRADELGDKETKTGT) form a disordered region. T50 serves as the catalytic Nucleophile. The residue at position 129 (S129) is a Phosphoserine.

Belongs to the peptidase T1B family. As to quaternary structure, the 20S proteasome core is composed of 14 alpha and 14 beta subunits that assemble into four stacked heptameric rings, resulting in a barrel-shaped structure. The two inner rings, each composed of seven catalytic beta subunits, are sandwiched by two outer rings, each composed of seven alpha subunits. H.volcanii produces at least 2 types of 20S proteasomes: an alpha1-beta proteasome and a proteasome containing all three subunits (alpha1, alpha2, and beta) that appears to be asymmetrical with homo-oligomeric alpha1 and alpha2 rings positioned on separate ends. The catalytic chamber with the active sites is on the inside of the barrel. Has probably a gated structure, the ends of the cylinder being occluded by the N-termini of the alpha-subunits. Is likely capped at one or both ends by the proteasome regulatory ATPase, PAN.

The protein localises to the cytoplasm. It carries out the reaction Cleavage of peptide bonds with very broad specificity.. Its activity is regulated as follows. The formation of the proteasomal ATPase PAN-20S proteasome complex, via the docking of the C-termini of PAN into the intersubunit pockets in the alpha-rings, triggers opening of the gate for substrate entry. Interconversion between the open-gate and close-gate conformations leads to a dynamic regulation of the 20S proteasome proteolysis activity. In vitro, the chymotrypsin-like activity of the alpha1-beta proteasome is potently inhibited by carbobenzoxyl-leucinyl-leucinyl-leucinal-H (MG132) and significantly by N-acetyl-leucinyl-leucinyl-norleucinal-H (calpain inhibitor I). Component of the proteasome core, a large protease complex with broad specificity involved in protein degradation. The H.volcanii alpha1-beta proteasome is able to cleave oligopeptides after Phe, Tyr and Trp, poorly after Glu but not after Arg. Thus, displays chymotrypsin-like activity, low caspase-like activity but no trypsin-like activity. The polypeptide is Proteasome subunit beta (Haloferax volcanii (strain ATCC 29605 / DSM 3757 / JCM 8879 / NBRC 14742 / NCIMB 2012 / VKM B-1768 / DS2) (Halobacterium volcanii)).